A 683-amino-acid polypeptide reads, in one-letter code: Transforming growth factor-beta-induced protein ig-h3 (683 aa).

Residues 1 to 23 (MALFVRLLALALALALGPAATLA) form the signal peptide. Phosphoserine is present on Ser-37. In terms of domain architecture, EMI spans 45 to 99 (GPNVCAVQKVIGTNRKYFTNCKQWYQRKICGKSTVISYECCPGYEKVPGERSCPA). Disulfide bonds link Cys-49–Cys-85, Cys-74–Cys-339, Cys-84–Cys-97, Cys-214–Cys-317, and Cys-473–Cys-478. The residue at position 65 (Cys-65) is an S-cysteinyl cysteine. FAS1 domains are found at residues 103–236 (LANL…DKVI), 240–371 (TNNI…DELL), 375–498 (SAKT…DRML), and 502–632 (SGTV…TSVL). The Cell attachment site signature appears at 642-644 (RGD).

As to quaternary structure, binds to type I, II, and IV collagens. In terms of processing, gamma-carboxylation is controversial. Gamma-carboxyglutamated; gamma-carboxyglutamate residues are formed by vitamin K dependent carboxylation; this may be required for calcium binding. According to a more recent report, does not contain vitamin K-dependent gamma-carboxyglutamate residues. Post-translationally, the EMI domain contains 2 expected intradomain disulfide bridges (Cys-49-Cys85 and Cys-84-Cys-97) and one unusual interdomain disulfide bridge to the second FAS1 domain (Cys-74-Cys-339). This arrangement violates the predicted disulfide bridge pattern of an EMI domain. Located primarily in the epithelium of normal adult cornea, in fetal stromal cells, and both endothelium- and stroma-derived cells in healing corneal wounds. Not expressed in normal adult endothelium and stroma.

The protein localises to the secreted. It is found in the extracellular space. The protein resides in the extracellular matrix. Its function is as follows. Plays a role in cell adhesion. May play a role in cell-collagen interactions. This is Transforming growth factor-beta-induced protein ig-h3 (TGFBI) from Oryctolagus cuniculus (Rabbit).